The chain runs to 126 residues: Methylglyoxal synthase (126 aa).

One can recognise an MGS-like domain in the interval M1–Q126. Substrate contacts are provided by residues H9, K13, T35–T38, and S55–G56. D61 acts as the Proton donor/acceptor in catalysis. Substrate is bound at residue H88.

The protein belongs to the methylglyoxal synthase family.

It carries out the reaction dihydroxyacetone phosphate = methylglyoxal + phosphate. Its function is as follows. Catalyzes the formation of methylglyoxal from dihydroxyacetone phosphate. The polypeptide is Methylglyoxal synthase (Thermus thermophilus (strain ATCC BAA-163 / DSM 7039 / HB27)).